Reading from the N-terminus, the 395-residue chain is G-protein coupled receptor 182 (395 aa).

Topologically, residues 1 to 53 (MSVIPSSRPVSTLAPDNDFREIHNWTELLHLFNQTFSDCHMELNENTKQVVLF) are extracellular. N-linked (GlcNAc...) asparagine glycans are attached at residues asparagine 24 and asparagine 33. The chain crosses the membrane as a helical span at residues 54-75 (VFYLAIFVVGLVENVLVICVNC). Residues 76-86 (RRSGRVGMLNL) lie on the Cytoplasmic side of the membrane. A helical membrane pass occupies residues 87 to 109 (YILNMAVADLGIILSLPVWMLEV). Residues 110–123 (MLEYTWLWGSFSCR) lie on the Extracellular side of the membrane. Cysteine 122 and cysteine 198 form a disulfide bridge. Residues 124 to 145 (FIHYFYLANMYSSIFFLTCLSI) traverse the membrane as a helical segment. Topologically, residues 146–166 (DRYVTLTNTSPSWQRHQHRIR) are cytoplasmic. Residues 167–189 (RAVCAGVWVLSAIIPLPEVVHIQ) traverse the membrane as a helical segment. At 190–213 (LLDGSEPMCLFLAPFETYSAWALA) the chain is on the extracellular side. A helical transmembrane segment spans residues 214–235 (VALSATILGFLLPFPLIAVFNI). Residues 236-254 (LSACRLRRQGQTESRRHCL) are Cytoplasmic-facing. Residues 255-276 (LMWAYIVVFVICWLPYHVTMLL) form a helical membrane-spanning segment. Over 277–295 (LTLHTTHIFLHCNLVNFLY) the chain is Extracellular. A helical transmembrane segment spans residues 296–316 (FFYEIIDCFSMLHCVANPILY). The Cytoplasmic segment spans residues 317-395 (NFLSPSFRGR…RTPHLHSAIP (79 aa)). Serine 329 is subject to Phosphoserine.

Belongs to the G-protein coupled receptor 1 family. In terms of tissue distribution, expressed in a wide variety of peripheral tissues in the adult rat with prominent expression in lung, testis, adrenal and liver.

It is found in the cell membrane. Its function is as follows. Orphan receptor. This Rattus norvegicus (Rat) protein is G-protein coupled receptor 182 (Gpr182).